A 273-amino-acid polypeptide reads, in one-letter code: Urease accessory protein UreD (273 aa).

It belongs to the UreD family. In terms of assembly, ureD, UreF and UreG form a complex that acts as a GTP-hydrolysis-dependent molecular chaperone, activating the urease apoprotein by helping to assemble the nickel containing metallocenter of UreC. The UreE protein probably delivers the nickel.

The protein localises to the cytoplasm. Its function is as follows. Required for maturation of urease via the functional incorporation of the urease nickel metallocenter. This chain is Urease accessory protein UreD, found in Rhizobium rhizogenes (strain K84 / ATCC BAA-868) (Agrobacterium radiobacter).